Reading from the N-terminus, the 406-residue chain is Peptidase T (406 aa).

H81 is a Zn(2+) binding site. Residue D83 is part of the active site. D142 provides a ligand contact to Zn(2+). E176 (proton acceptor) is an active-site residue. Zn(2+)-binding residues include E177, D199, and H381.

This sequence belongs to the peptidase M20B family. Requires Zn(2+) as cofactor.

The protein resides in the cytoplasm. It catalyses the reaction Release of the N-terminal residue from a tripeptide.. In terms of biological role, cleaves the N-terminal amino acid of tripeptides. The polypeptide is Peptidase T (Streptococcus suis (strain 98HAH33)).